A 212-amino-acid polypeptide reads, in one-letter code: uncharacterized protein (212 aa).

Glycine 53, glutamate 74, and aspartate 96 together coordinate S-adenosyl-L-methionine.

It belongs to the methyltransferase superfamily. YrrT family.

Functionally, could be a S-adenosyl-L-methionine-dependent methyltransferase. This is an uncharacterized protein from Anoxybacillus flavithermus (strain DSM 21510 / WK1).